Reading from the N-terminus, the 227-residue chain is Peroxiredoxin-like 2A (227 aa).

The tract at residues leucine 13–isoleucine 111 is thioredoxin fold. Active-site redox-active residues include cysteine 84 and cysteine 87.

This sequence belongs to the peroxiredoxin-like PRXL2 family. PRXL2A subfamily.

Its subcellular location is the cytoplasm. Involved in redox regulation of the cell. Acts as an antioxidant. This Xenopus laevis (African clawed frog) protein is Peroxiredoxin-like 2A (prxl2a).